The following is a 440-amino-acid chain: NADH-quinone oxidoreductase subunit D 1 (440 aa).

The protein belongs to the complex I 49 kDa subunit family. In terms of assembly, NDH-1 is composed of 14 different subunits. Subunits NuoB, C, D, E, F, and G constitute the peripheral sector of the complex.

It is found in the cell membrane. It carries out the reaction a quinone + NADH + 5 H(+)(in) = a quinol + NAD(+) + 4 H(+)(out). Functionally, NDH-1 shuttles electrons from NADH, via FMN and iron-sulfur (Fe-S) centers, to quinones in the respiratory chain. The immediate electron acceptor for the enzyme in this species is believed to be a menaquinone. Couples the redox reaction to proton translocation (for every two electrons transferred, four hydrogen ions are translocated across the cytoplasmic membrane), and thus conserves the redox energy in a proton gradient. This is NADH-quinone oxidoreductase subunit D 1 from Streptomyces griseus subsp. griseus (strain JCM 4626 / CBS 651.72 / NBRC 13350 / KCC S-0626 / ISP 5235).